The primary structure comprises 546 residues: MAAKDVKFGRTAREKMLRGVDILADAVKVTLGPKGRNVVIEKSFGAPRITKDGVSVAKEVELEDKFENMGAQMLREVASKTNDTAGDGTTTATVLGQAIVQEGAKAVAAGMNPMDLKRGIDLAVNEVVAELLKKAKKINTSEEVAQVGTISANGEAEIGKMIAEAMQKVGNEGVITVEEAKTAETELEVVEGMQFDRGYLSPYFVTNPEKMVADLEDAYILLHEKKLSNLQALLPVLEAVVQTSKPLLIIAEDVEGEALATLVVNKLRGGLKIAAVKAPGFGDCRKAMLEDIAILTGGQVISEDLGIKLESVTLDMLGRAKKVSISKENTTIVDGAGQKAEIDARVGQIKQQIEETTSDYDREKLQERLAKLAGGVAVIRVGGATEVEVKEKKDRVDDALNATRAAVEEGIVAGGGTALLRASTKITAKGVNADQEAGINIVRRAIQAPARQITTNAGEEASVIVGKILENTSETFGYNTANGEYGDLISLGIVDPVKVVRTALQNAASVAGLLITTEAMIAELPKKDAAPAGMPGGMGGMGGMDF.

ATP is bound by residues 30-33, K51, 87-91, G415, and D495; these read TLGP and DGTTT.

It belongs to the chaperonin (HSP60) family. As to quaternary structure, forms a cylinder of 14 subunits composed of two heptameric rings stacked back-to-back. Interacts with the co-chaperonin GroES.

The protein localises to the cytoplasm. It catalyses the reaction ATP + H2O + a folded polypeptide = ADP + phosphate + an unfolded polypeptide.. Its function is as follows. Together with its co-chaperonin GroES, plays an essential role in assisting protein folding. The GroEL-GroES system forms a nano-cage that allows encapsulation of the non-native substrate proteins and provides a physical environment optimized to promote and accelerate protein folding. In Brucella melitensis biotype 1 (strain ATCC 23456 / CCUG 17765 / NCTC 10094 / 16M), this protein is Chaperonin GroEL.